The chain runs to 750 residues: Methylmalonyl-CoA mutase, mitochondrial (750 aa).

A mitochondrion-targeting transit peptide spans 1 to 32; that stretch reads MLRAKNQLFLLSPHYLKQVKESSGSRLIQQRL. Glutamine 50 lines the malonyl-CoA pocket. Lysine 89 is subject to N6-acetyllysine. Malonyl-CoA-binding positions include 96–99 and 106–110; these read YPTM and TIRQY. N6-acetyllysine is present on lysine 212. Malonyl-CoA-binding positions include 216–218, arginine 228, lysine 255, histidine 265, and 304–306; these read TIQ and RLS. Lysine 335 carries the post-translational modification N6-acetyllysine. Lysine 343 bears the N6-succinyllysine mark. At serine 481 the chain carries Phosphoserine. Position 595 is an N6-succinyllysine (lysine 595). Position 602 is an N6-acetyllysine (lysine 602). The 133-residue stretch at 614–746 folds into the B12-binding domain; sequence RPRLLVAKMG…DDIEKCLEKK (133 aa). Position 627 (histidine 627) interacts with adenosylcob(III)alamin.

The protein belongs to the methylmalonyl-CoA mutase family. In terms of assembly, homodimer. Interacts (the apoenzyme form) with MMAA; the interaction is GTP dependent. Adenosylcob(III)alamin is required as a cofactor.

The protein localises to the mitochondrion matrix. The protein resides in the mitochondrion. It localises to the cytoplasm. It catalyses the reaction (R)-methylmalonyl-CoA = succinyl-CoA. With respect to regulation, inhibited by itaconyl-CoA, a metabolite that inactivates the coenzyme B12 cofactor. Its function is as follows. Catalyzes the reversible isomerization of methylmalonyl-CoA (MMCoA) (generated from branched-chain amino acid metabolism and degradation of dietary odd chain fatty acids and cholesterol) to succinyl-CoA (3-carboxypropionyl-CoA), a key intermediate of the tricarboxylic acid cycle. The chain is Methylmalonyl-CoA mutase, mitochondrial (MMUT) from Pongo abelii (Sumatran orangutan).